Reading from the N-terminus, the 507-residue chain is AMSH-like ubiquitin thioesterase 1 (507 aa).

The 131-residue stretch at 333–463 folds into the MPN domain; that stretch reads LHIATSMMDT…IFRLTTPGGM (131 aa). Positions 411, 413, 424, 426, 469, 475, and 477 each coordinate Zn(2+). A JAMM motif motif is present at residues 411–424; that stretch reads HTHPTQSCFMSSID.

The protein belongs to the peptidase M67C family. It depends on Zn(2+) as a cofactor.

It is found in the membrane. The protein resides in the cytoplasm. Functionally, zinc metalloprotease that cleaves 'Lys-48'- and 'Lys-63'-linked polyubiquitin chains. The sequence is that of AMSH-like ubiquitin thioesterase 1 (AMSH1) from Arabidopsis thaliana (Mouse-ear cress).